Here is a 169-residue protein sequence, read N- to C-terminus: tRNA (cytidine(56)-2'-O)-methyltransferase (169 aa).

Residues Leu-77, 103–107, and 121–128 contribute to the S-adenosyl-L-methionine site; these read GSEKV and IGNQPHSE.

It belongs to the aTrm56 family. In terms of assembly, homodimer.

Its subcellular location is the cytoplasm. The enzyme catalyses cytidine(56) in tRNA + S-adenosyl-L-methionine = 2'-O-methylcytidine(56) in tRNA + S-adenosyl-L-homocysteine + H(+). Functionally, specifically catalyzes the AdoMet-dependent 2'-O-ribose methylation of cytidine at position 56 in tRNAs. In Sulfurisphaera tokodaii (strain DSM 16993 / JCM 10545 / NBRC 100140 / 7) (Sulfolobus tokodaii), this protein is tRNA (cytidine(56)-2'-O)-methyltransferase.